Consider the following 359-residue polypeptide: Caffeic acid 3-O-methyltransferase (359 aa).

126-132 (MNQDKVL) contacts substrate. The segment at 158 to 176 (AFEYHGTDPRFNKVFNRGM) is substrate binding. S-adenosyl-L-methionine contacts are provided by G204, D227, D247, M248, and K261. The Proton acceptor role is filled by H265.

This sequence belongs to the class I-like SAM-binding methyltransferase superfamily. Cation-independent O-methyltransferase family. COMT subfamily. In terms of assembly, homodimer. Fruit. Not expressed in leaf.

The enzyme catalyses (E)-caffeate + S-adenosyl-L-methionine = (E)-ferulate + S-adenosyl-L-homocysteine + H(+). Its pathway is aromatic compound metabolism; phenylpropanoid biosynthesis. In terms of biological role, catalyzes the conversion of caffeic acid to ferulic acid and of 5-hydroxyferulic acid to sinapic acid. The resulting products may subsequently be converted to the corresponding alcohols that are incorporated into lignins. This is Caffeic acid 3-O-methyltransferase (COMT) from Capsicum annuum (Capsicum pepper).